The primary structure comprises 138 residues: Cysteine desulfuration protein SufE (138 aa).

The Cysteine persulfide intermediate role is filled by Cys51.

Belongs to the SufE family. In terms of assembly, homodimer. Interacts with SufS.

The protein localises to the cytoplasm. It functions in the pathway cofactor biosynthesis; iron-sulfur cluster biosynthesis. Participates in cysteine desulfuration mediated by SufS. Cysteine desulfuration mobilizes sulfur from L-cysteine to yield L-alanine and constitutes an essential step in sulfur metabolism for biosynthesis of a variety of sulfur-containing biomolecules. Functions as a sulfur acceptor for SufS, by mediating the direct transfer of the sulfur atom from the S-sulfanylcysteine of SufS, an intermediate product of cysteine desulfuration process. The sequence is that of Cysteine desulfuration protein SufE from Sodalis glossinidius (strain morsitans).